The chain runs to 258 residues: Phosphate import ATP-binding protein PstB 3 (258 aa).

The 244-residue stretch at 10 to 253 (MTARSLAVHY…PANSLTQGYI (244 aa)) folds into the ABC transporter domain. Residue 42–49 (GPSGCGKS) coordinates ATP.

The protein belongs to the ABC transporter superfamily. Phosphate importer (TC 3.A.1.7) family. In terms of assembly, the complex is composed of two ATP-binding proteins (PstB), two transmembrane proteins (PstC and PstA) and a solute-binding protein (PstS).

The protein localises to the cell inner membrane. It catalyses the reaction phosphate(out) + ATP + H2O = ADP + 2 phosphate(in) + H(+). Its function is as follows. Part of the ABC transporter complex PstSACB involved in phosphate import. Responsible for energy coupling to the transport system. The polypeptide is Phosphate import ATP-binding protein PstB 3 (Paramagnetospirillum magneticum (strain ATCC 700264 / AMB-1) (Magnetospirillum magneticum)).